Consider the following 76-residue polypeptide: Candidate secreted effector protein MPL124497 (76 aa).

The signal sequence occupies residues 1-21; the sequence is MKLIIFAAISVAFMSFDQVLG.

The protein belongs to the CPGH1 family.

Its subcellular location is the secreted. It is found in the host cell. The protein resides in the host cytoplasm. The protein localises to the host nucleus. Rust effector delivered into infected tissues to modulate host functions and contribute to pathogen virulence. Enhances leaf colonization by the bacteria Pseudomonas syringae and the oomycete Hyaloperonospora arabidopsidis pathogens in an Arabidopsis thaliana infection model. In Melampsora larici-populina (strain 98AG31 / pathotype 3-4-7) (Poplar leaf rust fungus), this protein is Candidate secreted effector protein MPL124497.